The following is a 408-amino-acid chain: Acetate kinase (408 aa).

Residue asparagine 10 participates in Mg(2+) binding. An ATP-binding site is contributed by lysine 17. Position 96 (arginine 96) interacts with substrate. The active-site Proton donor/acceptor is the aspartate 153. ATP is bound by residues 213-217 (HLGNG) and 288-290 (DLR). Glutamate 393 lines the Mg(2+) pocket.

This sequence belongs to the acetokinase family. Homodimer. Requires Mg(2+) as cofactor. Mn(2+) serves as cofactor.

It is found in the cytoplasm. The enzyme catalyses acetate + ATP = acetyl phosphate + ADP. It participates in metabolic intermediate biosynthesis; acetyl-CoA biosynthesis; acetyl-CoA from acetate: step 1/2. Functionally, catalyzes the formation of acetyl phosphate from acetate and ATP. Can also catalyze the reverse reaction. The protein is Acetate kinase of Borrelia recurrentis (strain A1).